Here is a 92-residue protein sequence, read N- to C-terminus: Small ribosomal subunit protein uS19 (92 aa).

Belongs to the universal ribosomal protein uS19 family.

Protein S19 forms a complex with S13 that binds strongly to the 16S ribosomal RNA. This Rhodopseudomonas palustris (strain BisB5) protein is Small ribosomal subunit protein uS19.